Reading from the N-terminus, the 138-residue chain is Ribosome-binding factor A (138 aa).

The disordered stretch occupies residues 112–138; sequence EARTQGQAPAADVEPAPGAAPDDEAEE. The span at 119 to 131 shows a compositional bias: low complexity; sequence APAADVEPAPGAA.

The protein belongs to the RbfA family. As to quaternary structure, monomer. Binds 30S ribosomal subunits, but not 50S ribosomal subunits or 70S ribosomes.

Its subcellular location is the cytoplasm. One of several proteins that assist in the late maturation steps of the functional core of the 30S ribosomal subunit. Associates with free 30S ribosomal subunits (but not with 30S subunits that are part of 70S ribosomes or polysomes). Required for efficient processing of 16S rRNA. May interact with the 5'-terminal helix region of 16S rRNA. In Anaeromyxobacter sp. (strain K), this protein is Ribosome-binding factor A.